Consider the following 232-residue polypeptide: MMAKVSKRMKEISAKINAEKKYPVSEAFDLLREVSSVKFVESVDVSVALGVDPRKSDQVVRGASVLPNGTGKTVRVAVFAKGPAADAAKEAGAEVVGMEDLADEVKKGNMDFDVVIASPDSMRVVGQLGQILGPKGLMPNPKIGTVTMDVAKAVRDAKAGQVRYRVDKAGIIHTTIGKVNFTSDALKQNLEQLLTDLKKAKPAVSKGIYLKKVSVSSTMGPGINVDFSDLNI.

The protein belongs to the universal ribosomal protein uL1 family. In terms of assembly, part of the 50S ribosomal subunit.

Binds directly to 23S rRNA. The L1 stalk is quite mobile in the ribosome, and is involved in E site tRNA release. Its function is as follows. Protein L1 is also a translational repressor protein, it controls the translation of the L11 operon by binding to its mRNA. This is Large ribosomal subunit protein uL1 from Francisella tularensis subsp. holarctica (strain LVS).